The sequence spans 531 residues: Tryptophan 6-halogenase ThaL (531 aa).

FAD contacts are provided by glycine 13, threonine 15, alanine 16, alanine 39, isoleucine 42, isoleucine 45, valine 47, and alanine 50. The active site involves lysine 79. Proline 111 contributes to the L-tryptophan binding site. Methionine 198 and leucine 349 together coordinate FAD. Residues serine 360 and glycine 361 each coordinate chloride. Isoleucine 362 provides a ligand contact to FAD. Tyrosine 454, tyrosine 455, glutamate 461, and phenylalanine 465 together coordinate L-tryptophan.

Belongs to the flavin-dependent halogenase family. Bacterial tryptophan halogenase subfamily. In terms of assembly, homodimer. Monomer in solution.

The catalysed reaction is L-tryptophan + FADH2 + chloride + O2 = 6-chloro-L-tryptophan + FAD + 2 H2O. It catalyses the reaction D-tryptophan + FADH2 + chloride + O2 = 6-chloro-D-tryptophan + FAD + 2 H2O. Functionally, involved in the biosynthesis of thienodolin, a plant growth-regulating compound. Catalyzes the chlorination of tryptophan (Trp) at C6 position to yield 6-chloro-tryptophan. It is also able to use bromide ions to generate monobrominated Trp. In vitro, accepts a wide range of amides and peptides carrying either L- or D-Trp at the N-terminus. The sequence is that of Tryptophan 6-halogenase ThaL from Streptomyces albogriseolus.